Reading from the N-terminus, the 29-residue chain is ShK homolog Ask132958 (29 aa).

A ShKT domain is found at 1–29; sequence CENTISGCSRADCLLTHRKQGCQKTCGLC. 3 disulfide bridges follow: Cys-1/Cys-29, Cys-8/Cys-22, and Cys-13/Cys-26.

This sequence belongs to the sea anemone type 1 potassium channel toxin family. Type 1a subfamily.

The protein localises to the secreted. Its subcellular location is the nematocyst. This peptide is similar to the potassium channel toxin ShK, but does not show activity on potassium channels. It appears that Lys-19, which is expected to occupy the pore of the channel, is not sufficiently accessible for binding, and therefore that this peptide must have a distinct functional role that does not involve potassium channels. It is noteworthy that this peptide is much more stable in the presence of trypsin, chymotrypsin and pepsin than the toxin ShK. This chain is ShK homolog Ask132958, found in Anemonia sulcata (Mediterranean snakelocks sea anemone).